Here is a 435-residue protein sequence, read N- to C-terminus: Origin recognition complex subunit 5 (435 aa).

37 to 44 (GHTASGKT) is a binding site for ATP.

Belongs to the ORC5 family. In terms of assembly, component of ORC, a complex composed of at least 6 subunits: ORC1, ORC2, ORC3, ORC4, ORC5 and ORC6. ORC is regulated in a cell-cycle dependent manner. It is sequentially assembled at the exit from anaphase of mitosis and disassembled as cells enter S phase. Multi-mono-ubiquitinated by OBI1; ubiquitination is important for efficient DNA replication origin site activation. Ubiquitination levels are low in mitotic and early G1-phAse cells and are induced in late G1-/early S-phase, peaking in S-phase and decrease toward the end of the cell cycle. Abundant in spleen, ovary, prostate, testis, and colon mucosa.

It is found in the nucleus. It localises to the chromosome. Functionally, component of the origin recognition complex (ORC) that binds origins of replication. DNA-binding is ATP-dependent. The specific DNA sequences that define origins of replication have not been identified yet. ORC is required to assemble the pre-replication complex necessary to initiate DNA replication. The protein is Origin recognition complex subunit 5 (ORC5) of Homo sapiens (Human).